The sequence spans 442 residues: Tubulin beta chain (442 aa).

GTP is bound by residues Gln11, Glu69, Ser138, Gly142, Thr143, Gly144, Asn204, and Asn226. Glu69 is a Mg(2+) binding site. The interval Glu421–Glu442 is disordered. The segment covering Thr429–Glu442 has biased composition (acidic residues).

This sequence belongs to the tubulin family. As to quaternary structure, dimer of alpha and beta chains. A typical microtubule is a hollow water-filled tube with an outer diameter of 25 nm and an inner diameter of 15 nM. Alpha-beta heterodimers associate head-to-tail to form protofilaments running lengthwise along the microtubule wall with the beta-tubulin subunit facing the microtubule plus end conferring a structural polarity. Microtubules usually have 13 protofilaments but different protofilament numbers can be found in some organisms and specialized cells. Mg(2+) is required as a cofactor.

The protein resides in the cytoplasm. It is found in the cytoskeleton. Functionally, tubulin is the major constituent of microtubules, a cylinder consisting of laterally associated linear protofilaments composed of alpha- and beta-tubulin heterodimers. Microtubules grow by the addition of GTP-tubulin dimers to the microtubule end, where a stabilizing cap forms. Below the cap, tubulin dimers are in GDP-bound state, owing to GTPase activity of alpha-tubulin. The protein is Tubulin beta chain (TUBB1) of Stylonychia lemnae (Ciliate).